The chain runs to 414 residues: 3-isopropylmalate dehydratase large subunit (414 aa).

The [4Fe-4S] cluster site is built by Cys295, Cys353, and Cys356.

The protein belongs to the aconitase/IPM isomerase family. LeuC type 2 subfamily. As to quaternary structure, heterodimer of LeuC and LeuD. The cofactor is [4Fe-4S] cluster.

It catalyses the reaction (2R,3S)-3-isopropylmalate = (2S)-2-isopropylmalate. It functions in the pathway amino-acid biosynthesis; L-leucine biosynthesis; L-leucine from 3-methyl-2-oxobutanoate: step 2/4. In terms of biological role, catalyzes the isomerization between 2-isopropylmalate and 3-isopropylmalate, via the formation of 2-isopropylmaleate. This is 3-isopropylmalate dehydratase large subunit from Pyrobaculum islandicum (strain DSM 4184 / JCM 9189 / GEO3).